Consider the following 312-residue polypeptide: uncharacterized protein (312 aa).

The next 8 helical transmembrane spans lie at 4 to 24, 45 to 65, 75 to 95, 117 to 137, 171 to 191, 217 to 237, 253 to 275, and 280 to 299; these read IFLA…KVIF, LITP…PLVL, IAGI…AVML, VILA…NLIW, GLGV…IQFL, TSMT…GVMI, AFIF…PLGI, and LLLI…AHTW.

It is found in the cell membrane. This is an uncharacterized protein from Bacillus subtilis (strain 168).